The sequence spans 669 residues: DNA polymerase epsilon subunit B (669 aa).

The tract at residues 96-115 (QISTRNGSADNLAKKAERSD) is disordered.

The protein belongs to the DNA polymerase epsilon subunit B family. In terms of assembly, heterotetramer. Consists of four subunits: POL2, DPB2, DPB3 and DPB4.

The protein resides in the nucleus. In terms of biological role, as accessory component of the DNA polymerase epsilon (DNA polymerase II) participates in chromosomal DNA replication. The sequence is that of DNA polymerase epsilon subunit B (DPB2) from Debaryomyces hansenii (strain ATCC 36239 / CBS 767 / BCRC 21394 / JCM 1990 / NBRC 0083 / IGC 2968) (Yeast).